The sequence spans 213 residues: Pyrrolidone-carboxylate peptidase (213 aa).

Residues E80, C143, and H165 contribute to the active site.

Belongs to the peptidase C15 family. As to quaternary structure, homotetramer.

Its subcellular location is the cytoplasm. It catalyses the reaction Release of an N-terminal pyroglutamyl group from a polypeptide, the second amino acid generally not being Pro.. Functionally, removes 5-oxoproline from various penultimate amino acid residues except L-proline. The protein is Pyrrolidone-carboxylate peptidase of Erwinia tasmaniensis (strain DSM 17950 / CFBP 7177 / CIP 109463 / NCPPB 4357 / Et1/99).